We begin with the raw amino-acid sequence, 297 residues long: B-lymphocyte antigen CD20 (297 aa).

Residues 1-56 lie on the Cytoplasmic side of the membrane; that stretch reads MTTPRNSVNGTFPAEPMKGPIAMQSGPKPLFRRMSSLVGPTQSFFMRESKTLGAVQ. Residue Ser-36 is modified to Phosphoserine. Residues 57-78 traverse the membrane as a helical segment; that stretch reads IMNGLFHIALGGLLMIPAGIYA. The epitope 1 stretch occupies residues 74 to 80; the sequence is AGIYAPI. The Extracellular segment spans residues 79–84; that stretch reads PICVTV. A helical membrane pass occupies residues 85-105; that stretch reads WYPLWGGIMYIISGSLLAATE. The Cytoplasmic segment spans residues 106-120; sequence KNSRKCLVKGKMIMN. Cys-111 carries the S-palmitoyl cysteine lipid modification. The chain crosses the membrane as a helical span at residues 121-141; the sequence is SLSLFAAISGMILSIMDILNI. At 142–188 the chain is on the extracellular side; it reads KISHFLKMESLNFIRAHTPYINIYNCEPANPSEKNSPSTQYCYSIQS. Positions 146 to 160 are epitope 2; that stretch reads FLKMESLNFIRAHTP. A disulfide bridge connects residues Cys-167 and Cys-183. The epitope 3 (recognized by antibodies, including Rituximab) stretch occupies residues 168-175; that stretch reads EPANPSEK. The chain crosses the membrane as a helical span at residues 189–209; it reads LFLGILSVMLIFAFFQELVIA. The Cytoplasmic portion of the chain corresponds to 210 to 297; that stretch reads GIVENEWKRT…SSPIENDSSP (88 aa). Cys-220 is lipidated: S-palmitoyl cysteine. Residue Ser-225 is modified to Phosphoserine. Thr-239 bears the Phosphothreonine mark. Residues 247 to 297 are disordered; the sequence is VGLTETSSQPKNEEDIEIIPIQEEEEEETETNFPEPPQDQESSPIENDSSP. Residues 260–276 show a composition bias toward acidic residues; that stretch reads EDIEIIPIQEEEEEETE. The segment covering 285–297 has biased composition (polar residues); that stretch reads DQESSPIENDSSP.

It belongs to the MS4A family. Forms homotetramers. Interacts with the heavy and light chains of cell surface IgM, the antigen-binding components of the BCR. Post-translationally, phosphorylated on serines and threonines in resting B-cells. Protein kinase C/PKC can use CD20 as substrate. As to expression, expressed on B-cells.

The protein localises to the cell membrane. B-lymphocyte-specific membrane protein that plays a role in the regulation of cellular calcium influx necessary for the development, differentiation, and activation of B-lymphocytes. Functions as a store-operated calcium (SOC) channel component promoting calcium influx after activation by the B-cell receptor/BCR. The chain is B-lymphocyte antigen CD20 (MS4A1) from Homo sapiens (Human).